The chain runs to 738 residues: DNA topoisomerase 4 subunit A (738 aa).

Residues 32–496 (LPDVRDGLKP…SFEEVTLTNQ (465 aa)) form the Topo IIA-type catalytic domain. Residue Tyr120 is the O-(5'-phospho-DNA)-tyrosine intermediate of the active site.

It belongs to the type II topoisomerase GyrA/ParC subunit family. ParC type 1 subfamily. As to quaternary structure, heterotetramer composed of ParC and ParE.

The protein localises to the cell membrane. The catalysed reaction is ATP-dependent breakage, passage and rejoining of double-stranded DNA.. Topoisomerase IV is essential for chromosome segregation. It relaxes supercoiled DNA. Performs the decatenation events required during the replication of a circular DNA molecule. This is DNA topoisomerase 4 subunit A from Rickettsia conorii (strain ATCC VR-613 / Malish 7).